A 234-amino-acid chain; its full sequence is Orotidine 5'-phosphate decarboxylase (234 aa).

Residues Asp11, Lys33, Asp60 to Thr69, Thr120, Arg181, Gln190, Gly210, and Arg211 each bind substrate. Lys62 functions as the Proton donor in the catalytic mechanism.

It belongs to the OMP decarboxylase family. Type 1 subfamily. Homodimer.

It catalyses the reaction orotidine 5'-phosphate + H(+) = UMP + CO2. Its pathway is pyrimidine metabolism; UMP biosynthesis via de novo pathway; UMP from orotate: step 2/2. Catalyzes the decarboxylation of orotidine 5'-monophosphate (OMP) to uridine 5'-monophosphate (UMP). This is Orotidine 5'-phosphate decarboxylase from Aliivibrio fischeri (strain ATCC 700601 / ES114) (Vibrio fischeri).